A 154-amino-acid chain; its full sequence is Myoglobin (154 aa).

One can recognise a Globin domain in the interval 2–148; that stretch reads GLSDGEWQIV…FRNDIAAKYK (147 aa). Residue S4 is modified to Phosphoserine. Residue H65 coordinates nitrite. O2 is bound at residue H65. Phosphothreonine is present on T68. H94 provides a ligand contact to heme b.

The protein belongs to the globin family. Monomeric.

It is found in the cytoplasm. The protein resides in the sarcoplasm. The catalysed reaction is Fe(III)-heme b-[protein] + nitric oxide + H2O = Fe(II)-heme b-[protein] + nitrite + 2 H(+). The enzyme catalyses H2O2 + AH2 = A + 2 H2O. Functionally, monomeric heme protein which primary function is to store oxygen and facilitate its diffusion within muscle tissues. Reversibly binds oxygen through a pentacoordinated heme iron and enables its timely and efficient release as needed during periods of heightened demand. Depending on the oxidative conditions of tissues and cells, and in addition to its ability to bind oxygen, it also has a nitrite reductase activity whereby it regulates the production of bioactive nitric oxide. Under stress conditions, like hypoxia and anoxia, it also protects cells against reactive oxygen species thanks to its pseudoperoxidase activity. This is Myoglobin (MB) from Lycaon pictus (African wild dog).